Reading from the N-terminus, the 851-residue chain is MSSDQTPQNRNRGGDDSYNPRLQQQTSQIPSTGPDQGQQRERSQEQESDHEHQQAQQHLHQFQQSNLTPSTTAFPSSTSIPTFSKQDQGYHNQFSSPQSSYRKIGNFAQSSNAPFLNEPHPIYATNYQQNVPSQSQFQFDYSSPYIGQSQSQSQSQSQAQPQPHPQPQTYQQLPHYSQASVSSLPPTYQAFHSMHEASSADNDSATNITTPQKRKKQKRSESVTPNTGENELKQLALRSSNIPLSELAQKVKQLENDSTTTSVSLEQSKMKENKETQRQLFGMVWLLNSCDLAPTAVIPRNRIYARYVQVCADNNLAPVSPASFGKLVKILYPNITTRRLGMRGQSKYHYCGIKLTGDENMQSQLLNYQQKQKHQSQEQYNQQAQVGSSTSSAGLAGHQSPMSSCNSSVSYEESPGPIISRAHTPSFSPINTPTISMSKSLNDQLPSISHMKFIPNLFYLLNSNVATSSNPHEPIQLPSIYPYLSKDADHDIADTLYSLYKVHVNSIFEALRYMQLKKLFSSFSTFNNILTAPVLKLYTTESLAEWVMKCDLIMYKKMIRMLSKLQLQLLIPQEQLLQLKQIADGYIKTLSTSLINSKVSQNFVMMKLKLAKHFVNLLNRLIKVIETGQPASRILNDDNEKNTMTQDWMKLDIHGIICREMPCNDNNIDTLTYILTGEVVNLIKVKSDNEQAPTMSDFANYISNLPSRFPEVNTRLFLLLASNLLTTCLREISLSGGEGFGAWWIVRCWIDEYLAWSFEVGGFFQDDLQEIVAQQQLNVQLPPPSLSSLPQTQQQNPVIQEETGTQEESLGNIDLLETSFDFDAKTSQPYQQPSHTESLLNFETNIDNLLN.

Composition is skewed to polar residues over residues 1 to 11 and 20 to 34; these read MSSDQTPQNRN and PRLQQQTSQIPSTGP. Disordered regions lie at residues 1–121, 134–170, and 195–230; these read MSSD…EPHP, QSQFQFDYSSPYIGQSQSQSQSQSQAQPQPHPQPQTY, and HEASSADNDSATNITTPQKRKKQKRSESVTPNTGEN. A compositionally biased stretch (basic and acidic residues) spans 38 to 53; it reads QQRERSQEQESDHEHQ. The span at 54-84 shows a compositional bias: low complexity; that stretch reads QAQQHLHQFQQSNLTPSTTAFPSSTSIPTFS. A compositionally biased stretch (polar residues) spans 85 to 114; sequence KQDQGYHNQFSSPQSSYRKIGNFAQSSNAP. A compositionally biased stretch (low complexity) spans 141-170; it reads YSSPYIGQSQSQSQSQSQAQPQPHPQPQTY. Residues 199 to 211 are compositionally biased toward polar residues; that stretch reads SADNDSATNITTP. The segment at residues 282 to 357 is a DNA-binding region (RFX-type winged-helix); that stretch reads GMVWLLNSCD…YHYCGIKLTG (76 aa). 2 disordered regions span residues 368-411 and 783-806; these read YQQK…SVSY and PPSLSSLPQTQQQNPVIQEETGTQ. The span at 384–393 shows a compositional bias: polar residues; that stretch reads AQVGSSTSSA. Residues 783–797 show a composition bias toward low complexity; the sequence is PPSLSSLPQTQQQNP.

The protein belongs to the RFX family.

It is found in the nucleus. Functionally, transcription factor involved in DNA damage responses, morphogenesis, and virulence. The sequence is that of Transcriptional regulator RFX1 (RFX1) from Candida albicans (strain SC5314 / ATCC MYA-2876) (Yeast).